The primary structure comprises 206 residues: Holliday junction branch migration complex subunit RuvA (206 aa).

The tract at residues 1–62 (MYDYLKGLIT…EDAQVLYGFP (62 aa)) is domain I. The segment at 63-141 (NLDQRELFRK…SLLETIELPS (79 aa)) is domain II. A flexible linker region spans residues 142 to 152 (TEDELPLFGVH). The domain III stretch occupies residues 153–206 (PYKHELEEAILALAALGYSEKELEKIRPLLEDNDKLETTDAYMKQALQLLLKLK).

It belongs to the RuvA family. As to quaternary structure, homotetramer. Forms an RuvA(8)-RuvB(12)-Holliday junction (HJ) complex. HJ DNA is sandwiched between 2 RuvA tetramers; dsDNA enters through RuvA and exits via RuvB. An RuvB hexamer assembles on each DNA strand where it exits the tetramer. Each RuvB hexamer is contacted by two RuvA subunits (via domain III) on 2 adjacent RuvB subunits; this complex drives branch migration. In the full resolvosome a probable DNA-RuvA(4)-RuvB(12)-RuvC(2) complex forms which resolves the HJ.

The protein localises to the cytoplasm. The RuvA-RuvB-RuvC complex processes Holliday junction (HJ) DNA during genetic recombination and DNA repair, while the RuvA-RuvB complex plays an important role in the rescue of blocked DNA replication forks via replication fork reversal (RFR). RuvA specifically binds to HJ cruciform DNA, conferring on it an open structure. The RuvB hexamer acts as an ATP-dependent pump, pulling dsDNA into and through the RuvAB complex. HJ branch migration allows RuvC to scan DNA until it finds its consensus sequence, where it cleaves and resolves the cruciform DNA. This is Holliday junction branch migration complex subunit RuvA from Lysinibacillus sphaericus (strain C3-41).